The following is a 634-amino-acid chain: UPF0329 protein ECU07_1850/ECU10_0050 (634 aa).

2 stretches are compositionally biased toward basic and acidic residues: residues 354–365 (REEREKREESKG) and 397–407 (GESKEEDRGEE). A disordered region spans residues 354 to 438 (REEREKREES…KGSGEKRISE (85 aa)). The span at 408 to 417 (GGVEAEDPLE) shows a compositional bias: acidic residues.

This sequence belongs to the UPF0329 family.

The polypeptide is UPF0329 protein ECU07_1850/ECU10_0050 (Encephalitozoon cuniculi (strain GB-M1) (Microsporidian parasite)).